A 256-amino-acid chain; its full sequence is Chorismate mutase (256 aa).

A Chorismate mutase domain is found at 3–255 (FTKPETVLNL…EVEYLLRRLE (253 aa)). The L-tyrosine site is built by Arg-75 and Arg-76. L-tryptophan contacts are provided by Asn-138, Asn-139, Gly-141, and Ser-142. Asn-139, Gly-141, Ser-142, and Thr-145 together coordinate L-tyrosine.

As to quaternary structure, homodimer.

The protein resides in the cytoplasm. The enzyme catalyses chorismate = prephenate. Its pathway is metabolic intermediate biosynthesis; prephenate biosynthesis; prephenate from chorismate: step 1/1. Each dimer has two allosteric binding sites that can bind the regulatory effectors tryptophan or tyrosine. Can bind either one tryptophan or one tyrosine, two tryptophan or two tyrosine or one tryptophan and one tyrosine, which differentially affect the catalytic activity. Activated by tryptophan and subject to feedback inhibition by tyrosine. In the presence of both tryptophan and tyrosine, the enzyme is in the activated state. Its function is as follows. Catalyzes the Claisen rearrangement of chorismate to prephenate. Acts at the first branch point in the aromatic amino acid pathway where it steers biosynthesis towards phenylalanine and tyrosine, and away from tryptophan. This chain is Chorismate mutase, found in Saccharomyces cerevisiae (strain ATCC 204508 / S288c) (Baker's yeast).